Here is a 423-residue protein sequence, read N- to C-terminus: Probable efflux pump mfs2 (423 aa).

11 helical membrane passes run Thr21–Val41, Ser49–His69, Leu79–Val99, Leu111–Val131, Trp138–His158, Ala220–Leu240, Tyr256–Tyr278, Ile295–Ala315, His319–Phe339, Ala360–Leu380, and Leu392–Trp411.

This sequence belongs to the major facilitator superfamily.

It localises to the membrane. Functionally, probable efflux pump; part of the gene cluster 27 that mediates the biosynthesis of asparasone A, a sclerotium-specific anthraquinone pigment important for sclerotial survival. This is Probable efflux pump mfs2 from Aspergillus flavus (strain ATCC 200026 / FGSC A1120 / IAM 13836 / NRRL 3357 / JCM 12722 / SRRC 167).